Consider the following 465-residue polypeptide: Cysteine--tRNA ligase (465 aa).

Cysteine 30 is a binding site for Zn(2+). Positions 32–42 match the 'HIGH' region motif; it reads ITVYDYCHVGH. Residues cysteine 214, histidine 239, and glutamate 243 each coordinate Zn(2+). The 'KMSKS' region motif lies at 271-275; sequence KMSKS. Lysine 274 lines the ATP pocket.

It belongs to the class-I aminoacyl-tRNA synthetase family. In terms of assembly, monomer. It depends on Zn(2+) as a cofactor.

The protein resides in the cytoplasm. The enzyme catalyses tRNA(Cys) + L-cysteine + ATP = L-cysteinyl-tRNA(Cys) + AMP + diphosphate. The polypeptide is Cysteine--tRNA ligase (Burkholderia ambifaria (strain ATCC BAA-244 / DSM 16087 / CCUG 44356 / LMG 19182 / AMMD) (Burkholderia cepacia (strain AMMD))).